A 350-amino-acid chain; its full sequence is Homeobox-leucine zipper protein HOX5 (350 aa).

A DNA-binding region (homeobox) is located at residues 83–142; sequence APEKKRRLTAEQVQMLERSFEEENKLEPERKTELARRLGMAPRQVAVWFQNRRARWKTKQ. Positions 141–185 are leucine-zipper; that stretch reads KQLEHDFDRLKAAYDALAADHHALLSDNDRLRAQVISLTEKLQDK. A disordered region spans residues 180–254; that stretch reads EKLQDKETSP…TNDDGDGGGA (75 aa). Residues 188-198 are compositionally biased toward low complexity; that stretch reads SPSSATITTAA.

This sequence belongs to the HD-ZIP homeobox family. Class I subfamily. As to quaternary structure, homodimer. May form a heterodimer with HOX4. Expressed in seedlings, roots, leaves, nodes, internodes, flowers and embryo.

It localises to the nucleus. Probable transcription activator that binds to the DNA sequence 5'-CAAT[AT]ATTG-3'. The chain is Homeobox-leucine zipper protein HOX5 (HOX5) from Oryza sativa subsp. indica (Rice).